We begin with the raw amino-acid sequence, 309 residues long: Ribosomal RNA large subunit methyltransferase F (309 aa).

This sequence belongs to the methyltransferase superfamily. METTL16/RlmF family.

It localises to the cytoplasm. The enzyme catalyses adenosine(1618) in 23S rRNA + S-adenosyl-L-methionine = N(6)-methyladenosine(1618) in 23S rRNA + S-adenosyl-L-homocysteine + H(+). Functionally, specifically methylates the adenine in position 1618 of 23S rRNA. The protein is Ribosomal RNA large subunit methyltransferase F of Cronobacter sakazakii (strain ATCC BAA-894) (Enterobacter sakazakii).